Reading from the N-terminus, the 606-residue chain is Proline--tRNA ligase (606 aa).

The protein belongs to the class-II aminoacyl-tRNA synthetase family. ProS type 1 subfamily. As to quaternary structure, homodimer.

The protein resides in the cytoplasm. It carries out the reaction tRNA(Pro) + L-proline + ATP = L-prolyl-tRNA(Pro) + AMP + diphosphate. Its function is as follows. Catalyzes the attachment of proline to tRNA(Pro) in a two-step reaction: proline is first activated by ATP to form Pro-AMP and then transferred to the acceptor end of tRNA(Pro). As ProRS can inadvertently accommodate and process non-cognate amino acids such as alanine and cysteine, to avoid such errors it has two additional distinct editing activities against alanine. One activity is designated as 'pretransfer' editing and involves the tRNA(Pro)-independent hydrolysis of activated Ala-AMP. The other activity is designated 'posttransfer' editing and involves deacylation of mischarged Ala-tRNA(Pro). The misacylated Cys-tRNA(Pro) is not edited by ProRS. The polypeptide is Proline--tRNA ligase (Kocuria rhizophila (strain ATCC 9341 / DSM 348 / NBRC 103217 / DC2201)).